A 521-amino-acid polypeptide reads, in one-letter code: Cytochrome P450 monooxygenase ARMGADRAFT_1018420 (521 aa).

A helical membrane pass occupies residues 9–26; sequence VSPIWILTAIVVVAYTTV. Heme is bound at residue Cys443. Asn450 carries an N-linked (GlcNAc...) asparagine glycan.

It belongs to the cytochrome P450 family. It depends on heme as a cofactor.

The protein localises to the membrane. It functions in the pathway secondary metabolite biosynthesis. Functionally, cytochrome P450 monooxygenase, part of the gene cluster that mediates the biosynthesis of melleolides, a range of antifungal and phytotoxic polyketide derivatives composed of an orsellinic acid (OA) moiety esterified to various sesquiterpene alcohols. The first step in melleolides biosynthesis is performed by the delta(6)-protoilludene synthase PRO1 which catalyzes the cyclization of farnesyl diphosphate to protoilludene. The orsellinic acid synthase armB produces OA by condensing acetyl-CoA with 3 malonyl-CoA units in a three-round chain elongation reaction folowed by a C2-C7 ring closure. ArmB further catalyzes the trans-esterification of OA to the various sesquiterpene alcohols resulting from the hydroxylation of protoilludene. The melleolides cluster also includes 5 cytochrome P450 monooxygenases, 4 NAD(+)-dependent oxidoreductases, one flavin-dependent oxidoreductase, and one O-methyltransferase. The cytochrome P450 monooxygenases may be involved in protoilludene hydroxylation to elaborate melleolides with multiple alcohol groups, such as melleolide D, which carries alcohol functionalities at C-4, C-5, C-10, and C-13. The role of the NAD(+)-dependent enzymes remains unknown. Numerous melleolides, including arnamial, show 5'-O-methylation of the aromatic moiety which may be catalyzed by the methyltransferase encoded in the cluster. The flavin-dependent oxidoreductase might represent the dehydrogenase yielding the aldehyde in position 1 of arnamial and other melleolides. Finally, several halogenase localized outside of the cluster, are able to catalyze the transfer of a single chlorine atom to the melleolide backbone, resulting in a 6'-chloromelleolide product. The polypeptide is Cytochrome P450 monooxygenase ARMGADRAFT_1018420 (Armillaria gallica (Bulbous honey fungus)).